Reading from the N-terminus, the 554-residue chain is Suppressor of hairless homolog (554 aa).

The disordered stretch occupies residues 1 to 31 (MYHPHHLPAHGQVQSHQHREDAAATSSRDVN). 3 consecutive DNA-binding regions follow at residues 83-90 (KSYGNEKR), 218-227 (RLRSQTVSTR), and 291-323 (RKVD…ERMY). Residues 381 to 471 (PNVHSLQLNG…YPTNLTFTFT (91 aa)) form the IPT/TIG domain. The segment at 489 to 554 (GSKRPSASMP…NGANMLRTAS (66 aa)) is disordered. Basic and acidic residues predominate over residues 508–519 (DSGRGNESDRGD).

The protein belongs to the Su(H) family. As to quaternary structure, interacts with activated Notch proteins.

The protein resides in the nucleus. In terms of biological role, transcriptional regulator that plays a central role in Notch signaling, a signaling pathway involved in cell-cell communication that regulates a broad spectrum of cell-fate determinations. Acts as a transcriptional repressor when it is not associated with Notch proteins. When associated with some Notch protein, it acts as a transcriptional activator that activates transcription of Notch target genes. Required for the transcriptional expression of Brachyury, suggesting that it participates in notochord differentiation. This Ciona intestinalis (Transparent sea squirt) protein is Suppressor of hairless homolog (Su(H)).